A 256-amino-acid polypeptide reads, in one-letter code: MLAKFGLCAVFLVLGTAATFDTDPEEASPRRARFSSNSPSDVARCLNGALAVGCGTFACLENSTCDTDGMHDICQLFFHTAATFNTQGKTFVKESLRCIANGVTSKVFQTIRRCGVFQRMISEVQEECYSRLDICGVARSNPEAIGEVVQVPAHFPNRYYSTLLQSLLACDEETVAVVRAGLVARLGPDMETLFQLLQNKHCPQGSNQGPNSAPAGWRWPMGSPPSFKIQPSMRGRDPTHLFARKRSVEALEREME.

An N-terminal signal peptide occupies residues 1 to 18 (MLAKFGLCAVFLVLGTAA). The propeptide occupies 19 to 33 (TFDTDPEEASPRRAR). A glycan (N-linked (GlcNAc...) asparagine) is linked at Asn62. Positions 204–241 (QGSNQGPNSAPAGWRWPMGSPPSFKIQPSMRGRDPTHL) are disordered.

Belongs to the stanniocalcin family. As to quaternary structure, homodimer; disulfide-linked. Produced and secreted by the corpuscles of Stannius.

The protein localises to the secreted. Functionally, its primary function is the prevention of hypercalcemia. Upon release into the circulation, it lowers calcium transport by the gills, thereby reducing its rate of influx from the environment into the extracellular compartment. STC also stimulates phosphate reabsorption by renal proximal tubules. The consequence of this action is increased levels of plasma phosphate, which combines with excess calcium and promotes its disposal into bone and scales. This Oncorhynchus mykiss (Rainbow trout) protein is Stanniocalcin (stc).